Here is a 1478-residue protein sequence, read N- to C-terminus: DNA-directed RNA polymerase subunit beta' (1478 aa).

3 residues coordinate Mg(2+): D535, D537, and D539. 4 residues coordinate Zn(2+): C1034, C1109, C1116, and C1119.

It belongs to the RNA polymerase beta' chain family. The RNAP catalytic core consists of 2 alpha, 1 beta, 1 beta' and 1 omega subunit. When a sigma factor is associated with the core the holoenzyme is formed, which can initiate transcription. The cofactor is Mg(2+). Zn(2+) is required as a cofactor.

It carries out the reaction RNA(n) + a ribonucleoside 5'-triphosphate = RNA(n+1) + diphosphate. DNA-dependent RNA polymerase catalyzes the transcription of DNA into RNA using the four ribonucleoside triphosphates as substrates. The polypeptide is DNA-directed RNA polymerase subunit beta' (Mycoplasmopsis agalactiae (strain NCTC 10123 / CIP 59.7 / PG2) (Mycoplasma agalactiae)).